The sequence spans 372 residues: Serine protease inhibitor 42Dd (372 aa).

The first 15 residues, 1-15 (MYYLCIFLWVTSVAC), serve as a signal peptide directing secretion. 2 N-linked (GlcNAc...) asparagine glycosylation sites follow: Asn197 and Asn232.

The protein belongs to the serpin family. Expressed in the ovary.

Its subcellular location is the secreted. Serine protease inhibitor with activity toward trypsin. Involved in innate immunity to fungal infection by negatively regulating the Toll signaling pathway and suppressing the expression of the antifungal peptide drosomycin. Acts upstream of SPE and grass, and downstream of the fungal cell wall pattern recognition receptor GNBP3. May function specifically in the GNBP3-dependent beta-1,3-glucan branch of the Toll pathway. This is Serine protease inhibitor 42Dd from Drosophila melanogaster (Fruit fly).